The following is a 98-amino-acid chain: Defensin (98 aa).

A signal peptide spans 1–19 (MRTFLVTFVLVVVVGVISA). The propeptide occupies 20 to 58 (YPSNPVEVEAEDFDAQDPDLQTFQDTFYEVPQVHSRQKR). 3 cysteine pairs are disulfide-bonded: Cys61–Cys88, Cys74–Cys94, and Cys78–Cys96.

As to expression, is synthesized by the fat body and eventually secreted into the hemolymph.

The protein localises to the secreted. Its function is as follows. Has antiparasitic activity against promastigote forms of L.major, and antibacterial activity against Gram-positive bacterium S.aureus. Has antifungal activity against the yeasts C.albicans and S.cerevisiae, but not C.glabrata. Has antifungal activity against filamentous fungi A.fumigatus, F.culmorum, F.oxysporum, N.crassa, T.viride and T.mentagrophytes, but not B.bassiana. The polypeptide is Defensin (Phlebotomus duboscqi (Sandfly)).